Reading from the N-terminus, the 674-residue chain is Putative kinase-like protein TMKL1 (674 aa).

The signal sequence occupies residues Met1–Thr25. Residues Ser26 to Arg295 are Extracellular-facing. N-linked (GlcNAc...) asparagine glycosylation is found at Asn57, Asn90, Asn95, and Asn110. LRR repeat units follow at residues His100–Phe122, Met124–Thr146, Ser148–Asn169, and Lys173–Pro194. Asn183 and Asn195 each carry an N-linked (GlcNAc...) asparagine glycan. LRR repeat units follow at residues Asn200 to Phe222, Gly224 to Gly244, and Glu247 to Lys269. N-linked (GlcNAc...) asparagine glycans are attached at residues Asn252 and Asn257. The chain crosses the membrane as a helical span at residues Leu296 to Leu323. The Cytoplasmic portion of the chain corresponds to Gln324–Phe674. The interval Ser331–Lys350 is disordered. Acidic residues predominate over residues Glu333 to Gly348. Ser334 is subject to Phosphoserine. The Protein kinase domain occupies Asn373–Phe674. Residue Thr375 is modified to Phosphothreonine. Phosphoserine is present on Ser454. The disordered stretch occupies residues Leu649–Phe674.

Belongs to the protein kinase superfamily.

It localises to the membrane. In terms of biological role, does not seem to have conserved a kinase activity. This is Putative kinase-like protein TMKL1 (TMKL1) from Arabidopsis thaliana (Mouse-ear cress).